The following is a 205-amino-acid chain: Phosphoribosyl-dephospho-CoA transferase (205 aa).

Residues D134 and D136 contribute to the active site.

Belongs to the MdcG family.

The enzyme catalyses apo-[malonate decarboxylase ACP] + 2'-(5''-triphospho-alpha-D-ribosyl)-3'-dephospho-CoA = holo-[malonate decarboxylase ACP] + diphosphate. In terms of biological role, transfers 2'-(5-triphosphoribosyl)-3'-dephosphocoenzyme-A to the apo-[acyl-carrier-protein] of the malonate decarboxylase to yield holo-[acyl-carrier-protein]. In Klebsiella pneumoniae (strain 342), this protein is Phosphoribosyl-dephospho-CoA transferase.